The primary structure comprises 162 residues: UPF0114 protein VCM66_0196 (162 aa).

The next 4 membrane-spanning stretches (helical) occupy residues 15-35 (IMAPIYLGLSLLLLALGIKFF), 53-73 (LILVALSLIDVSLVGGLIVMV), 109-126 (VSASIVAISSIHLLKVFM), and 136-156 (IKWYLLLHITFVVSAFAMGYL).

The protein belongs to the UPF0114 family.

Its subcellular location is the cell membrane. This chain is UPF0114 protein VCM66_0196, found in Vibrio cholerae serotype O1 (strain M66-2).